Reading from the N-terminus, the 334-residue chain is MARPRGGRWLLGVLLALCRLAAPLAKSLEPVSWSAGNPKFMSGKGLVIYPEIGDKLDIICPKAEPSKPYDYYKLYLVKKDQADACSTVMDPNVLVTCNRPEQEIRFTIKFQEFSPNYMGLEFKRQQDYFITSTSNGTLDGLENREGGVCQTRSMKIVMKVGQDPNAVIPEQLTTSRPSKEADNTVKIVTQSPRHKVPTVEEPGKPGSVNQNGQETQGPSDGFLSSKVAVFAAIGAGCVIFILIIIFLVVLLIKIRKRHRKHTQQRAAALSLSTLASPKCSGNAGSEPSDIIIPLRTTENNYCPHYEKVSGDYGHPVYIVQEMPPQSPANIYYKV.

Positions 1 to 25 (MARPRGGRWLLGVLLALCRLAAPLA) are cleaved as a signal peptide. Residues 26–160 (KSLEPVSWSA…TRSMKIVMKV (135 aa)) form the Ephrin RBD domain. The Extracellular portion of the chain corresponds to 26 to 231 (KSLEPVSWSA…FLSSKVAVFA (206 aa)). 2 cysteine pairs are disulfide-bonded: cysteine 60/cysteine 97 and cysteine 85/cysteine 149. Asparagine 135 carries an N-linked (GlcNAc...) asparagine glycan. Residues 175-218 (SRPSKEADNTVKIVTQSPRHKVPTVEEPGKPGSVNQNGQETQGP) form a disordered region. The span at 207–218 (SVNQNGQETQGP) shows a compositional bias: polar residues. A helical membrane pass occupies residues 232 to 252 (AIGAGCVIFILIIIFLVVLLI). Over 253 to 334 (KIRKRHRKHT…QSPANIYYKV (82 aa)) the chain is Cytoplasmic. Positions 332-334 (YKV) match the PDZ-binding motif.

This sequence belongs to the ephrin family. Binds to the receptor tyrosine kinase EPHB2. Interacts with GRIP1 and GRIP2. Inducible phosphorylation of tyrosine residues in the cytoplasmic domain.

Its subcellular location is the membrane. In terms of biological role, cell surface transmembrane ligand for Eph receptors, a family of receptor tyrosine kinases which are crucial for migration, repulsion and adhesion during neuronal, vascular and epithelial development. Binds promiscuously Eph receptors residing on adjacent cells, leading to contact-dependent bidirectional signaling into neighboring cells. The signaling pathway downstream of the receptor is referred to as forward signaling while the signaling pathway downstream of the ephrin ligand is referred to as reverse signaling. This chain is Ephrin-B1 (EFNB1), found in Gallus gallus (Chicken).